The primary structure comprises 177 residues: Large ribosomal subunit protein uL6 (177 aa).

This sequence belongs to the universal ribosomal protein uL6 family. As to quaternary structure, part of the 50S ribosomal subunit.

In terms of biological role, this protein binds to the 23S rRNA, and is important in its secondary structure. It is located near the subunit interface in the base of the L7/L12 stalk, and near the tRNA binding site of the peptidyltransferase center. The chain is Large ribosomal subunit protein uL6 from Thioalkalivibrio sulfidiphilus (strain HL-EbGR7).